We begin with the raw amino-acid sequence, 152 residues long: Deoxyuridine 5'-triphosphate nucleotidohydrolase (152 aa).

Substrate is bound by residues 70 to 72 (RSG), Asn-83, 87 to 89 (LID), and Met-97.

It belongs to the dUTPase family. Mg(2+) is required as a cofactor.

The catalysed reaction is dUTP + H2O = dUMP + diphosphate + H(+). The protein operates within pyrimidine metabolism; dUMP biosynthesis; dUMP from dCTP (dUTP route): step 2/2. This enzyme is involved in nucleotide metabolism: it produces dUMP, the immediate precursor of thymidine nucleotides and it decreases the intracellular concentration of dUTP so that uracil cannot be incorporated into DNA. The polypeptide is Deoxyuridine 5'-triphosphate nucleotidohydrolase (Buchnera aphidicola subsp. Baizongia pistaciae (strain Bp)).